Here is a 388-residue protein sequence, read N- to C-terminus: tRNA (guanine-N(7)-)-methyltransferase (388 aa).

S-adenosyl-L-methionine-binding residues include E129, E154, and D181. 2 residues coordinate substrate: K207 and D237.

This sequence belongs to the class I-like SAM-binding methyltransferase superfamily. TrmB family.

The catalysed reaction is guanosine(46) in tRNA + S-adenosyl-L-methionine = N(7)-methylguanosine(46) in tRNA + S-adenosyl-L-homocysteine. It participates in tRNA modification; N(7)-methylguanine-tRNA biosynthesis. Catalyzes the formation of N(7)-methylguanine at position 46 (m7G46) in tRNA. The polypeptide is tRNA (guanine-N(7)-)-methyltransferase (Wolinella succinogenes (strain ATCC 29543 / DSM 1740 / CCUG 13145 / JCM 31913 / LMG 7466 / NCTC 11488 / FDC 602W) (Vibrio succinogenes)).